Here is a 201-residue protein sequence, read N- to C-terminus: PLASMODESMATA CALLOSE-BINDING PROTEIN 1 (201 aa).

Residues 1-19 (MAALVLSLLLLSLAGHSSA) form the signal peptide. An intrachain disulfide couples cysteine 22 to cysteine 84. Positions 107 to 141 (SASGSSGSTTVTPGTTNPKGSPTTTTLPGSGTNSP) are enriched in low complexity. Positions 107-164 (SASGSSGSTTVTPGTTNPKGSPTTTTLPGSGTNSPYSGNPTNGVFGGNSTGGTTGTGI) are disordered. The span at 150–161 (VFGGNSTGGTTG) shows a compositional bias: gly residues. An N-linked (GlcNAc...) asparagine glycan is attached at asparagine 154. A lipid anchor (GPI-anchor amidated serine) is attached at serine 172. A propeptide spans 173–201 (SAFALKNSSKLFICLLLIASSGFCSFLML) (removed in mature form). The N-linked (GlcNAc...) asparagine glycan is linked to asparagine 179.

Post-translationally, contains two additional disulfide bonds. Expressed in the shoot apical region and in young leaves but also detected in the laminar and vasculature of mature leaves.

It is found in the cell membrane. The protein resides in the cell junction. The protein localises to the plasmodesma. Able to bind (1-&gt;3)-beta-D-glucans (laminarin). Probably involved in cell-to-cell trafficking regulation. This is PLASMODESMATA CALLOSE-BINDING PROTEIN 1 (PDCB1) from Arabidopsis thaliana (Mouse-ear cress).